The primary structure comprises 199 residues: BREX protein BrxA (199 aa).

Belongs to the BrxA family.

In terms of biological role, BREX systems (bacteriophage exclusion) provide immunity against bacteriophage. Part of a type 1 BREX system which protects against dsDNA phage. This system allows phage adsorption but prevents phage DNA replication, without degradation of the phage DNA. Methylation of bacterial DNA by PglX guides self/non-self discrimination. This Paramagnetospirillum magneticum (strain ATCC 700264 / AMB-1) (Magnetospirillum magneticum) protein is BREX protein BrxA.